Reading from the N-terminus, the 124-residue chain is MVPLIVAVSVGGIAGTLLRFATGNWVNANWPRHFYTATLAVNIVGCLLIGVLYGLFLIRPEVPIEVRAGLMVGFLGGLTTFSSFSLDTVRLLESGQVPLALGYAAISVFGGLLATWAGLSLTKL.

A run of 4 helical transmembrane segments spans residues 1–21 (MVPLIVAVSVGGIAGTLLRFA), 38–58 (TLAVNIVGCLLIGVLYGLFLI), 69–89 (GLMVGFLGGLTTFSSFSLDTV), and 99–119 (LALGYAAISVFGGLLATWAGL). Na(+) is bound by residues glycine 76 and threonine 79.

Belongs to the fluoride channel Fluc/FEX (TC 1.A.43) family.

It localises to the cell inner membrane. It catalyses the reaction fluoride(in) = fluoride(out). With respect to regulation, na(+) is not transported, but it plays an essential structural role and its presence is essential for fluoride channel function. In terms of biological role, fluoride-specific ion channel. Important for reducing fluoride concentration in the cell, thus reducing its toxicity. The protein is Fluoride-specific ion channel FluC of Pseudomonas fluorescens (strain Pf0-1).